Here is a 347-residue protein sequence, read N- to C-terminus: S-adenosylmethionine:tRNA ribosyltransferase-isomerase (347 aa).

It belongs to the QueA family. Monomer.

The protein localises to the cytoplasm. The catalysed reaction is 7-aminomethyl-7-carbaguanosine(34) in tRNA + S-adenosyl-L-methionine = epoxyqueuosine(34) in tRNA + adenine + L-methionine + 2 H(+). It functions in the pathway tRNA modification; tRNA-queuosine biosynthesis. Its function is as follows. Transfers and isomerizes the ribose moiety from AdoMet to the 7-aminomethyl group of 7-deazaguanine (preQ1-tRNA) to give epoxyqueuosine (oQ-tRNA). In Treponema denticola (strain ATCC 35405 / DSM 14222 / CIP 103919 / JCM 8153 / KCTC 15104), this protein is S-adenosylmethionine:tRNA ribosyltransferase-isomerase.